A 165-amino-acid polypeptide reads, in one-letter code: 3-isopropylmalate dehydratase small subunit (165 aa).

Belongs to the LeuD family. LeuD type 2 subfamily. As to quaternary structure, heterodimer of LeuC and LeuD.

The catalysed reaction is (2R,3S)-3-isopropylmalate = (2S)-2-isopropylmalate. It participates in amino-acid biosynthesis; L-leucine biosynthesis; L-leucine from 3-methyl-2-oxobutanoate: step 2/4. In terms of biological role, catalyzes the isomerization between 2-isopropylmalate and 3-isopropylmalate, via the formation of 2-isopropylmaleate. This is 3-isopropylmalate dehydratase small subunit from Desulfovibrio desulfuricans (strain ATCC 27774 / DSM 6949 / MB).